A 623-amino-acid chain; its full sequence is E3 ubiquitin-protein ligase DTX1 (623 aa).

WWE domains follow at residues 13-93 (HNFG…PVRR) and 94-170 (NFFE…RLRR). The disordered stretch occupies residues 224-319 (KVPSGPPPAL…RASIPPGVPA (96 aa)). A compositionally biased stretch (pro residues) spans 227–242 (SGPPPALPPPPPPPIH). Over residues 292-311 (GQNNLNRPGEQRTSGSSSRA) the composition is skewed to polar residues. The segment at 413–474 (CTICMERLVT…DGSLQCPTCK (62 aa)) adopts an RING-type zinc-finger fold.

The protein belongs to the Deltex family. As to quaternary structure, may form a homo- or heterodimer with other members of the Deltex family. Probably interacts with Notch1. As to expression, specifically expressed in regions undergoing neuronal differentiation. Mainly colocalizes with Notch1.

The enzyme catalyses S-ubiquitinyl-[E2 ubiquitin-conjugating enzyme]-L-cysteine + [acceptor protein]-L-lysine = [E2 ubiquitin-conjugating enzyme]-L-cysteine + N(6)-ubiquitinyl-[acceptor protein]-L-lysine.. It functions in the pathway protein modification; protein ubiquitination. In terms of biological role, regulator of Notch signaling, a signaling pathway involved in cell-cell communications that regulates a broad spectrum of cell-fate determinations. Probably acts both as a positive and negative regulator of Notch, depending on the developmental and cell context. Functions as a ubiquitin ligase protein in vivo, mediating ubiquitination and promoting degradation of MEKK1, suggesting that it may regulate the Notch pathway via some ubiquitin ligase activity. In Xenopus laevis (African clawed frog), this protein is E3 ubiquitin-protein ligase DTX1 (dtx1).